The primary structure comprises 291 residues: N-acetylmannosamine kinase (291 aa).

ATP contacts are provided by residues 5-12 and 132-139; these read AIDIGGTK and GVGGGVVC. 4 residues coordinate Zn(2+): histidine 156, cysteine 166, cysteine 168, and cysteine 173.

The protein belongs to the ROK (NagC/XylR) family. NanK subfamily. In terms of assembly, homodimer.

It catalyses the reaction an N-acyl-D-mannosamine + ATP = an N-acyl-D-mannosamine 6-phosphate + ADP + H(+). The protein operates within amino-sugar metabolism; N-acetylneuraminate degradation; D-fructose 6-phosphate from N-acetylneuraminate: step 2/5. Catalyzes the phosphorylation of N-acetylmannosamine (ManNAc) to ManNAc-6-P. This chain is N-acetylmannosamine kinase, found in Salmonella paratyphi B (strain ATCC BAA-1250 / SPB7).